The sequence spans 536 residues: MDRVLLSSQLSSQTVVNTRVQQGSGGINSIGFAVIRKGSLKLRCYAIGGLGGGENLNDPLKESNNGPVLQGFNGSSASFRTVGAKITQETGDFFVSDAEGDPDKPTDGFSSIDEAIGALHEGKFVIAVDDESGDNEGDLVMAATLADPESIAFMIRNGSGIISVGMKEEDLTRLMIPMMSPIAEIEDISAAASTVTVDARVGISTGVSAADRAKTIFTLASPDSKPTDLRRPGHIFPLKYRNGGVLKRAGHTEASVDLVALAGLRPVSVLSTVINPVDGSMAGMPVLKQMALEHDIPIVSIADLIRYRRKREKLVELIAVSRLPTKWGLFRAYCYQSKLDGTEHIAVAKGDIGDGEDVLVRVHSECLTGDILGSARCDCGNQLDLAMQLIDKAGRGVLVYLRGHEGRGIGLGQKLRAYNLQDDGHDTVQANVELGLAVDSREYGIGAQILRDMGVRTMRLMTNNPAKFVGLKGYGLAVVGRVPVISPITKENQRYLETKRTKMGHVYGSDLPGNVPEEFLNPDDIAGDQDEDDTHN.

The transit peptide at 1–43 directs the protein to the chloroplast; the sequence is MDRVLLSSQLSSQTVVNTRVQQGSGGINSIGFAVIRKGSLKLR. The interval 44–310 is inactive DHBP synthase; it reads CYAIGGLGGG…IADLIRYRRK (267 aa). Residues 133–134, Asp138, and 248–252 each bind D-ribulose 5-phosphate; these read GD and RAGHT. Residues 311 to 536 are GTP cyclohydrolase II; the sequence is REKLVELIAV…GDQDEDDTHN (226 aa). 361-365 serves as a coordination point for GTP; sequence RVHSE. The Zn(2+) site is built by Cys366, Cys377, and Cys379. Residues Gln382, 405-407, and Thr427 contribute to the GTP site; that span reads EGR. Residue Asp439 is the Proton acceptor; for GTP cyclohydrolase activity of the active site. The Nucleophile; for GTP cyclohydrolase activity role is filled by Arg441. Residues Thr462 and Lys467 each coordinate GTP. The interval 507–536 is disordered; sequence YGSDLPGNVPEEFLNPDDIAGDQDEDDTHN. The span at 525 to 536 shows a compositional bias: acidic residues; that stretch reads IAGDQDEDDTHN.

This sequence in the N-terminal section; belongs to the DHBP synthase family. The protein in the C-terminal section; belongs to the GTP cyclohydrolase II family. The cofactor is Zn(2+).

It is found in the plastid. It localises to the chloroplast. The enzyme catalyses GTP + 4 H2O = 2,5-diamino-6-hydroxy-4-(5-phosphoribosylamino)-pyrimidine + formate + 2 phosphate + 3 H(+). The protein operates within cofactor biosynthesis; riboflavin biosynthesis; 5-amino-6-(D-ribitylamino)uracil from GTP: step 1/4. Involved in riboflavin biosynthesis. Catalyzes the conversion of GTP to 2,5-diamino-6-ribosylamino-4(3H)-pyrimidinone 5'-phosphate (DARP), formate and pyrophosphate. In Oryza sativa subsp. japonica (Rice), this protein is Probable monofunctional riboflavin biosynthesis protein RIBA 3, chloroplastic (RIBA3).